We begin with the raw amino-acid sequence, 350 residues long: S-adenosylmethionine:tRNA ribosyltransferase-isomerase (350 aa).

The protein belongs to the QueA family. In terms of assembly, monomer.

The protein localises to the cytoplasm. The catalysed reaction is 7-aminomethyl-7-carbaguanosine(34) in tRNA + S-adenosyl-L-methionine = epoxyqueuosine(34) in tRNA + adenine + L-methionine + 2 H(+). Its pathway is tRNA modification; tRNA-queuosine biosynthesis. Its function is as follows. Transfers and isomerizes the ribose moiety from AdoMet to the 7-aminomethyl group of 7-deazaguanine (preQ1-tRNA) to give epoxyqueuosine (oQ-tRNA). The protein is S-adenosylmethionine:tRNA ribosyltransferase-isomerase of Bacillus cytotoxicus (strain DSM 22905 / CIP 110041 / 391-98 / NVH 391-98).